Here is a 1089-residue protein sequence, read N- to C-terminus: WD repeat-containing protein on Y chromosome (1089 aa).

WD repeat units lie at residues 155–199 (EEVA…IRTA), 207–249 (PHAV…RGPF), 329–368 (RIPL…EPSA), 372–411 (GHNG…LLQT), 462–501 (THAA…RKII), 514–553 (TIDI…VIRN), and 601–641 (FHTD…RRYS). The segment at 661-684 (KRSKRWASRAPHSGSHMMSHTGSH) is disordered. Over residues 672–684 (HSGSHMMSHTGSH) the composition is skewed to low complexity. 2 WD repeats span residues 767–806 (KTGD…IPEA) and 850–889 (GHLK…LGTL). The interval 1049 to 1089 (LNIKLPSRRRSDRTNDPRNMRTAKTRGDMGLGHRSSHTSQN) is disordered.

The protein is WD repeat-containing protein on Y chromosome of Drosophila willistoni (Fruit fly).